Consider the following 177-residue polypeptide: SPbeta prophage-derived uncharacterized N-acetyltransferase YokL (177 aa).

The region spanning 11–170 (LTLRAIQPED…DGICFGMTRE (160 aa)) is the N-acetyltransferase domain.

Belongs to the acetyltransferase family.

This chain is SPbeta prophage-derived uncharacterized N-acetyltransferase YokL (yokL), found in Bacillus subtilis (strain 168).